We begin with the raw amino-acid sequence, 113 residues long: Putative pterin-4-alpha-carbinolamine dehydratase (113 aa).

This sequence belongs to the pterin-4-alpha-carbinolamine dehydratase family.

The enzyme catalyses (4aS,6R)-4a-hydroxy-L-erythro-5,6,7,8-tetrahydrobiopterin = (6R)-L-erythro-6,7-dihydrobiopterin + H2O. The polypeptide is Putative pterin-4-alpha-carbinolamine dehydratase (Hydrogenovibrio crunogenus (strain DSM 25203 / XCL-2) (Thiomicrospira crunogena)).